The following is a 376-amino-acid chain: tRNA-aminoacylation cofactor ARC1 (376 aa).

Positions 22 to 46 (KEQSAQAAQWESVLKSGQIQPHLDQ) are interaction with methionyl-tRNA synthetase MES1. Interaction with glutamyl-tRNA synthetase GUS1 regions lie at residues 52-61 (RDNTFIVSTL) and 91-121 (TYTT…EINH). Positions 133–206 (KKKAPAGGAA…QNKAPEKPKP (74 aa)) are disordered. The span at 146-180 (AKADEDVSKKAKKQDHPRGKPDEETLKKLREEAKA) shows a compositional bias: basic and acidic residues. A compositionally biased stretch (low complexity) spans 186–199 (KAANAKQQQEQQNK). The 103-residue stretch at 205–307 (KPSAIDFRVG…KDSKAGDKVF (103 aa)) folds into the tRNA-binding domain.

It belongs to the tRNA-aminoacylation cofactor ARC1 family. Component of a yeast aminoacyl-tRNA synthase (aaRS) complex formed by methionyl-tRNA synthase MES1, glutamyl-tRNA synthase GUS1 and the tRNA aminoacylation cofactor ARC1 in a stoichiometric complex. Interacts (via N-ter) with MES1 (via N-ter) and GUS1 (via N-ter). Can also form a stable binary complex with either MES1 or GUS1 that is functional in terms of aminoacylation.

It localises to the cytoplasm. Functionally, binds to tRNA and functions as a cofactor for the methionyl-tRNA synthetase (MetRS) and glutamyl-tRNA synthetase (GluRS). Forms a complex with MetRS and GluRS and increases their affinity for cognate tRNAs due to the presence of a tRNA binding domain in its middle and C-terminal part. Binds specifically G4 quadruplex nucleic acid structures (these are four-stranded right-handed helices, stabilized by guanine base quartets). Also required for cytoplasmic confinement of the synthetases and tRNA. The sequence is that of tRNA-aminoacylation cofactor ARC1 (ARC1) from Saccharomyces cerevisiae (strain ATCC 204508 / S288c) (Baker's yeast).